Reading from the N-terminus, the 509-residue chain is Surface lipoprotein assembly modifier (509 aa).

The first 32 residues, 1-32 (MNLMINLKPLTFLPFFGRLVFLSGVIYNTAWA), serve as a signal peptide directing secretion. Positions 33-204 (NTVIPVDNSR…SYIDTINQRD (172 aa)) are N-terminal domain. Positions 43 to 72 (PDETFSQTSPKQHLFSQKPKPTEPTSSASS) are disordered. The segment covering 46-57 (TFSQTSPKQHLF) has biased composition (polar residues). The stretch at 120-153 (FLLKWAQAVVARKQGKLNESVRLYRQIIAEKPNL) is one TPR repeat. The C-terminal probable beta barrel stretch occupies residues 205–509 (SWNVYGGVNY…RIYLTFSKTF (305 aa)). 14 consecutive transmembrane segments (beta stranded) span residues 206 to 216 (WNVYGGVNYLH), 245 to 256 (LSYFINLSKNWS), 261 to 270 (FFTEFSADIN), 284 to 294 (STRLNLGGGYR), 298 to 308 (TEVKLMPFVEQ), 331 to 341 (SGINLDVDYWL), 345 to 355 (WKISTVLEYTE), 371 to 381 (YSISNTLIYMP), 386 to 395 (FWFVGLDYYQ), 408 to 417 (QGIRLGWGQE), 423 to 432 (STRLQTSYAT), 461 to 470 (GVNFTIWHRS), 476 to 485 (ITPKITWAYQ), and 499 to 509 (NRIYLTFSKTF).

This sequence belongs to the Slam family.

The protein localises to the cell outer membrane. Functionally, required for correct export to the cell surface of some cell outer membrane lipoproteins (tested with PM1514) upon heterologous expression in E.coli and probably also in Pasteurella. The protein is Surface lipoprotein assembly modifier of Pasteurella multocida (strain Pm70).